The chain runs to 633 residues: Probable potassium transport system protein Kup (633 aa).

12 helical membrane-spanning segments follow: residues 21-41 (MLVA…LYTL), 61-81 (ILSL…MMFV), 112-132 (LLVV…MITP), 149-169 (GIDH…FLIQ), 176-196 (IGIL…ALGV), 217-237 (FFMV…LALT), 258-278 (WFLL…ALLL), 290-310 (LLAP…ATVI), 348-368 (IYIG…VIGF), 377-397 (AYGV…SAVM), 398-418 (LLLW…FLLV), and 430-450 (IVQG…LMTT).

The protein belongs to the HAK/KUP transporter (TC 2.A.72) family.

The protein resides in the cell inner membrane. The catalysed reaction is K(+)(in) + H(+)(in) = K(+)(out) + H(+)(out). Functionally, transport of potassium into the cell. Likely operates as a K(+):H(+) symporter. The protein is Probable potassium transport system protein Kup of Pseudomonas fluorescens (strain Pf0-1).